Consider the following 142-residue polypeptide: Galactose-6-phosphate isomerase subunit LacA (142 aa).

This sequence belongs to the LacAB/RpiB family. As to quaternary structure, heteromultimeric protein consisting of LacA and LacB.

The catalysed reaction is aldehydo-D-galactose 6-phosphate = keto-D-tagatose 6-phosphate. Its pathway is carbohydrate metabolism; D-galactose 6-phosphate degradation; D-tagatose 6-phosphate from D-galactose 6-phosphate: step 1/1. In Staphylococcus epidermidis (strain ATCC 35984 / DSM 28319 / BCRC 17069 / CCUG 31568 / BM 3577 / RP62A), this protein is Galactose-6-phosphate isomerase subunit LacA.